The primary structure comprises 374 residues: Putative 12-oxophytodienoate reductase 5 (374 aa).

Residues 30 to 32, Ala63, and Gln105 each bind FMN; that span reads PMT. 177-180 contributes to the substrate binding site; that stretch reads HGAN. Residue Tyr182 is the Proton donor of the active site. Arg229 is a binding site for FMN. Arg270 lines the substrate pocket. Residues Gly300 and 321–322 each bind FMN; that span reads GR.

This sequence belongs to the NADH:flavin oxidoreductase/NADH oxidase family. FMN serves as cofactor.

Functionally, putative oxophytodienoate reductase that may be involved in the biosynthesis or metabolism of oxylipin signaling molecules. This chain is Putative 12-oxophytodienoate reductase 5 (OPR5), found in Oryza sativa subsp. japonica (Rice).